The primary structure comprises 136 residues: Histone H3.3 (136 aa).

The interval 1–45 is disordered; the sequence is MARTKQTARKSTGGKAPRKQLASKAARKAAPATGGVKKPHRYRPP. Residue Lys-5 is modified to N6,N6,N6-trimethyllysine; alternate. Lys-5 is modified (N6,N6-dimethyllysine; alternate). N6-methyllysine; alternate occurs at positions 5 and 10. The residue at position 10 (Lys-10) is an N6-acetyllysine; alternate. At Ser-11 the chain carries Phosphoserine. Lys-15 is subject to N6,N6-dimethyllysine; alternate. N6-acetyllysine; alternate occurs at positions 15, 19, 24, 28, and 37. 4 positions are modified to N6-methyllysine; alternate: Lys-19, Lys-24, Lys-28, and Lys-37. Low complexity predominate over residues 19-32; sequence KQLASKAARKAAPA. Residues Lys-28 and Lys-37 each carry the N6,N6,N6-trimethyllysine; alternate modification. Lys-28 and Lys-37 each carry N6,N6-dimethyllysine; alternate. N6-acetyllysine occurs at positions 57 and 65. Lys-80 is subject to N6,N6,N6-trimethyllysine; alternate. Lys-80 is subject to N6,N6-dimethyllysine; alternate. Lys-80 bears the N6-methyllysine; alternate mark. At Lys-123 the chain carries N6-acetyllysine.

Belongs to the histone H3 family. As to quaternary structure, the nucleosome is a histone octamer containing two molecules each of H2A, H2B, H3 and H4 assembled in one H3-H4 heterotetramer and two H2A-H2B heterodimers. The octamer wraps approximately 147 bp of DNA. In terms of processing, phosphorylated by ark1 to form H3S10ph in a cell cycle-dependent manner during mitosis and meiosis. H3S10ph is also formed by ssp2, promotes subsequent H3K14ac formation by gcn5, and is required for transcriptional activation through TBP recruitment to the promoters. Dephosphorylation is performed by sds21. Mono-, di- and trimethylated by the COMPASS complex to form H3K4me1/2/3. H3K4me activates gene expression by regulating transcription elongation and plays a role in telomere length maintenance. H3K4me enrichment correlates with transcription levels, and occurs in a 5' to 3' gradient with H3K4me3 enrichment at the 5'-end of genes, shifting to H3K4me2 and then H3K4me1. Methylated by clr4 to form H3K9me1. H3K9me1 represents a specific tag for epigenetic transcriptional repression by recruiting swi6/HP1 to methylated histones. Targeting to histone probably involves clr3 and rik1. Essential for silencing of centromeres and directional switching of the mating type. Methylated by set2 to form H3K36me. H3K36me represses gene expression. Methylated by dot1 to form H3K79me. H3K79me is required for association of SIR proteins with telomeric regions and for telomeric silencing. The COMPASS-mediated formation of H3K4me2/3 and the dot1-mediated formation of H3K79me require H2BK123ub1. Post-translationally, acetylation of histone H3 leads to transcriptional activation. H3K14ac formation by gcn5 is promoted by H3S10ph. H3K14ac can also be formed by esa1. H3K56ac formation occurs predominantly in newly synthesized H3 molecules during G1, S and G2/M of the cell cycle and may be involved in DNA repair. Acetylation at Lys-123 (H3K122ac) plays a central role in chromatin structure: localizes at the surface of the histone octamer and stimulates transcription, possibly by promoting nucleosome instability.

The protein localises to the nucleus. Its subcellular location is the chromosome. Functionally, core component of nucleosome. Nucleosomes wrap and compact DNA into chromatin, limiting DNA accessibility to the cellular machineries which require DNA as a template. Histones thereby play a central role in transcription regulation, DNA repair, DNA replication and chromosomal stability. DNA accessibility is regulated via a complex set of post-translational modifications of histones, also called histone code, and nucleosome remodeling. This chain is Histone H3.3 (hht3), found in Schizosaccharomyces pombe (strain 972 / ATCC 24843) (Fission yeast).